A 176-amino-acid chain; its full sequence is NAD(P)H-quinone oxidoreductase subunit 6, chloroplastic (176 aa).

5 helical membrane-spanning segments follow: residues 10–30 (ILMLFGGFVLLLGGLGVVLLT), 33–53 (IYSAFSLGLVLVCISLFYFLL), 60–80 (VAQLLIYVGAINVLIIFAVMF), 95–115 (IGDGFTSLVCITIVFSLMTTI), and 152–172 (FYLPFELISIILLVSLIGAIT).

This sequence belongs to the complex I subunit 6 family. NDH is composed of at least 16 different subunits, 5 of which are encoded in the nucleus.

The protein resides in the plastid. Its subcellular location is the chloroplast thylakoid membrane. The enzyme catalyses a plastoquinone + NADH + (n+1) H(+)(in) = a plastoquinol + NAD(+) + n H(+)(out). It carries out the reaction a plastoquinone + NADPH + (n+1) H(+)(in) = a plastoquinol + NADP(+) + n H(+)(out). NDH shuttles electrons from NAD(P)H:plastoquinone, via FMN and iron-sulfur (Fe-S) centers, to quinones in the photosynthetic chain and possibly in a chloroplast respiratory chain. The immediate electron acceptor for the enzyme in this species is believed to be plastoquinone. Couples the redox reaction to proton translocation, and thus conserves the redox energy in a proton gradient. This chain is NAD(P)H-quinone oxidoreductase subunit 6, chloroplastic (ndhG), found in Triticum aestivum (Wheat).